The sequence spans 261 residues: Carnitinyl-CoA dehydratase (261 aa).

Glu111 (nucleophile) is an active-site residue. The active-site Proton acceptor is the Glu131.

The protein belongs to the enoyl-CoA hydratase/isomerase family.

The catalysed reaction is (R)-carnitinyl-CoA = crotonobetainyl-CoA + H2O. It participates in amine and polyamine metabolism; carnitine metabolism. Catalyzes the reversible dehydration of L-carnitinyl-CoA to crotonobetainyl-CoA. The chain is Carnitinyl-CoA dehydratase from Salmonella paratyphi C (strain RKS4594).